A 516-amino-acid chain; its full sequence is Serine carboxypeptidase II-3 (516 aa).

An N-terminal signal peptide occupies residues 1 to 20; that stretch reads MKCTVVALVLLVAVQCLVLG. The propeptide occupies 21 to 77; it reads AGPAAAAKARRTRQGDYLNRLRGSPSSRASWESLAAVEEQTTTKAAGRPAPVAAAVE. 3 disulfide bridges follow: C143–C391, C300–C315, and C339–C359. N-linked (GlcNAc...) asparagine glycosylation is found at N194 and N205. S236 is a catalytic residue. Residue N301 is glycosylated (N-linked (GlcNAc...) asparagine). Residues 342-352 constitute a propeptide, linker peptide; the sequence is EKLVTPPIAPS. N380 carries N-linked (GlcNAc...) asparagine glycosylation. Catalysis depends on residues D427 and H484.

It belongs to the peptidase S10 family. Carboxypeptidase II is a dimer, where each monomer is composed of two chains linked by a disulfide bond. Post-translationally, the linker peptide is endoproteolytically excised during enzyme maturation.

The catalysed reaction is Preferential release of a C-terminal arginine or lysine residue.. In Hordeum vulgare (Barley), this protein is Serine carboxypeptidase II-3 (CXP;2-3).